Consider the following 888-residue polypeptide: Leucine--tRNA ligase (888 aa).

Residues 42–52 (PYPSGKLHMGH) carry the 'HIGH' region motif. Positions 640 to 644 (TMSKS) match the 'KMSKS' region motif. Lys643 serves as a coordination point for ATP.

This sequence belongs to the class-I aminoacyl-tRNA synthetase family.

It is found in the cytoplasm. It catalyses the reaction tRNA(Leu) + L-leucine + ATP = L-leucyl-tRNA(Leu) + AMP + diphosphate. This Polaromonas naphthalenivorans (strain CJ2) protein is Leucine--tRNA ligase.